The chain runs to 471 residues: Variant surface glycoprotein WRATAT A (471 aa).

An N-terminal signal peptide occupies residues 1–18; that stretch reads MSVLFLLLAITRTASVKA. 2 N-linked (GlcNAc...) asparagine glycosylation sites follow: Asn61 and Asn133. The tract at residues 373–457 is disordered; the sequence is QEQTLATTGT…ANTTGSSNSF (85 aa). The span at 379 to 392 shows a compositional bias: low complexity; the sequence is TTGTKSSSPQSTQQ. 2 cysteine pairs are disulfide-bonded: Cys401–Cys414 and Cys410–Cys427. A compositionally biased stretch (basic and acidic residues) spans 401–447; the sequence is CNDKAKETECNSPCKWDKEEKDEKKRCKLSEEGKQAEKENQEGKDGK. Polar residues predominate over residues 448 to 457; it reads ANTTGSSNSF. Asn449 carries an N-linked (GlcNAc...) asparagine glycan. The GPI-anchor amidated serine moiety is linked to residue Ser454. The propeptide at 455–471 is removed in mature form; that stretch reads NSFVIKTSPLLLAVLLL.

Its subcellular location is the cell membrane. VSG forms a coat on the surface of the parasite. The trypanosome evades the immune response of the host by expressing a series of antigenically distinct VSGs from an estimated 1000 VSG genes. This is Variant surface glycoprotein WRATAT A from Trypanosoma brucei rhodesiense.